Reading from the N-terminus, the 744-residue chain is Glucosamine inositolphosphorylceramide transferase 1 (744 aa).

The next 3 helical transmembrane spans lie at 31–51 (FLVA…WLVV), 378–398 (SLFG…VGFV), and 460–480 (LFFC…VHFL). Residues Asn-534, 558–563 (NSLNNR), 579–581 (DDD), Arg-609, and 665–669 (FNCED) contribute to the substrate site. Asp-581 contributes to the Mn(2+) binding site. Cysteines 667 and 718 form a disulfide. The active site involves Asp-669.

This sequence belongs to the glycosyltransferase 64 family. Mn(2+) is required as a cofactor. Highly expressed in almost all tissues.

The protein localises to the membrane. It functions in the pathway sphingolipid metabolism. Functionally, essential protein. Glycosyltransferase that mediates the glycosylation of glycosylinositol phosphorylceramides (GIPCs), the major sphingolipids in the plasma membrane; acts as a HexN(Ac)-specific GIPC sugar transferase. Responsible for the glycosylation of a subgroup of GIPCs found in seeds and pollen that contain GlcNAc and GlcN (GlcN(Ac)). Maybe involved in the maintenance of cell-cell adhesion. This is Glucosamine inositolphosphorylceramide transferase 1 from Oryza sativa subsp. japonica (Rice).